A 548-amino-acid polypeptide reads, in one-letter code: Medium/long-chain-fatty-acid--CoA/3-oxocholest-4-en-26-oate--CoA ligase (548 aa).

ATP is bound by residues 174–182 (TGGTTGFPK), Asp415, Arg430, and Lys521. Residues 520 to 541 (GKPDYRWAKEQTEARPADDVHA) are compositionally biased toward basic and acidic residues. Residues 520 to 548 (GKPDYRWAKEQTEARPADDVHAGHVTSGG) are disordered.

This sequence belongs to the ATP-dependent AMP-binding enzyme family.

The enzyme catalyses a medium-chain fatty acid + ATP + CoA = a medium-chain fatty acyl-CoA + AMP + diphosphate. It carries out the reaction a long-chain fatty acid + ATP + CoA = a long-chain fatty acyl-CoA + AMP + diphosphate. The catalysed reaction is (25S)-3-oxocholest-4-en-26-oate + ATP + CoA = (25S)-3-oxocholest-4-en-26-oyl-CoA + AMP + diphosphate. It participates in lipid metabolism; fatty acid biosynthesis. Its pathway is steroid metabolism; cholesterol metabolism. Its function is as follows. Catalyzes the activation of medium/long-chain fatty acids as acyl-coenzyme A (acyl-CoA), which are then transferred to the multifunctional polyketide synthase (PKS) type III for further chain extension. Also involved in the degradation of cholesterol via the degradation of the side chains of C-24 branched-chain sterols. Catalyzes the ATP-dependent CoA thioesterification of the sterol 3-oxocholest-4-en-26-oate to yield 3-oxocholest-4-en-26-oyl-CoA. The chain is Medium/long-chain-fatty-acid--CoA/3-oxocholest-4-en-26-oate--CoA ligase from Mycobacterium bovis (strain ATCC BAA-935 / AF2122/97).